A 903-amino-acid polypeptide reads, in one-letter code: FIGNL1-interacting regulator of recombination and mitosis (903 aa).

Residues serine 101 and serine 795 each carry the phosphoserine modification. N6-acetyllysine is present on lysine 843.

In terms of assembly, interacts (via its N-terminal region) with PLK1; controls PLK1 kinase activity. Interacts (via the KVVXF motif) with PPP1CC; controls PLK1 kinase activity. Interacts with FIGNL1; may regulate homologous recombination. In terms of processing, phosphorylation at Ser-101 by PLK1 strengthens FIRRM-PLK1 interaction. Phosphorylation at Ser-795 by PLK1 negatively regulates its interaction with PPP1CC.

The protein resides in the chromosome. Its subcellular location is the centromere. It is found in the kinetochore. It localises to the nucleus. The protein localises to the midbody. The protein resides in the cytoplasm. Its subcellular location is the cytoskeleton. It is found in the spindle. Its function is as follows. Regulates PLK1 kinase activity at kinetochores and promotes faithful chromosome segregation in prometaphase by bridging kinase and phosphatase activities. Phosphorylation of FIRRM by PLK1 negatively regulates its interaction with the phosphatase, PPP1CC, thus creating a negative feedback loop for maintaining proper PLK1 kinase activity during mitosis. In complex with FIGL1 may regulate homologous recombination. This is FIGNL1-interacting regulator of recombination and mitosis from Mus musculus (Mouse).